The primary structure comprises 221 residues: Eukaryotic translation initiation factor 3 subunit K (221 aa).

A PCI domain is found at 46-207; sequence YDLEANLACL…NIKTKHITEK (162 aa).

Belongs to the eIF-3 subunit K family. In terms of assembly, component of the eukaryotic translation initiation factor 3 (eIF-3) complex.

It localises to the cytoplasm. In terms of biological role, component of the eukaryotic translation initiation factor 3 (eIF-3) complex, which is involved in protein synthesis of a specialized repertoire of mRNAs and, together with other initiation factors, stimulates binding of mRNA and methionyl-tRNAi to the 40S ribosome. The eIF-3 complex specifically targets and initiates translation of a subset of mRNAs involved in cell proliferation. The chain is Eukaryotic translation initiation factor 3 subunit K from Aedes aegypti (Yellowfever mosquito).